The sequence spans 1275 residues: Membrane-associated guanylate kinase, WW and PDZ domain-containing protein 2 (1275 aa).

Residues 17-101 (ESVIGRNPEG…PLRLKCVKQG (85 aa)) form the PDZ 1 domain. Residues 109 to 283 (RHYLNLRFQK…PVYSQPEELK (175 aa)) enclose the Guanylate kinase-like domain. The segment at 203–305 (LPGATPSAEG…ENEDSDPLPD (103 aa)) is disordered. A compositionally biased stretch (basic and acidic residues) spans 280–295 (EELKDQMDDTKPTKPE). 2 WW domains span residues 301–334 (DPLP…DPRL) and 347–380 (NELP…NPVL). The interval 301–380 (DPLPDNWEMA…RRTQFENPVL (80 aa)) is interaction with DDN. Y361 carries the phosphotyrosine modification. 2 PDZ domains span residues 425–509 (STTL…CRGY) and 604–682 (TLTI…HRGG). S685 bears the Phosphoserine mark. The tract at residues 698 to 740 (ENQGSPQTSLSAPAVPQNLPFPPALHRSSFPDSTEAFDPRKPD) is disordered. The span at 699 to 708 (NQGSPQTSLS) shows a compositional bias: polar residues. A PDZ 4 domain is found at 777–859 (DVHLRRMESG…NGQVNLTVRR (83 aa)). The residue at position 826 (Y826) is a Phosphotyrosine. The interval 868 to 912 (CPENGRSPGSVSTHHSSPRSDYATYSNSNHAAPSSNASPPEGFAS) is disordered. 2 positions are modified to phosphoserine: S883 and S884. The segment covering 893-907 (SNSNHAAPSSNASPP) has biased composition (low complexity). Residues 919-1009 (DVVIHRKENE…SVTLRIIPQE (91 aa)) enclose the PDZ 5 domain. Residues 1010 to 1040 (ELNSPTSAPSSEKQSPMAQQHSPLAQQSPLA) show a composition bias toward polar residues. Residues 1010–1128 (ELNSPTSAPS…PDTRQYPLSD (119 aa)) are disordered. Residue S1013 is modified to Phosphoserine. Residues 1067 to 1083 (NSYRSEVKARQDVKPDI) are compositionally biased toward basic and acidic residues. The 83-residue stretch at 1139 to 1221 (TVDMEKGAKG…RVRLLLKRGT (83 aa)) folds into the PDZ 6 domain.

Belongs to the MAGUK family. As to quaternary structure, interacts (via its WW domains) with DRPLA. Interacts (via its second PDZ domain) with PTEN (via unphosphorylated C-terminus); this interaction diminishes the degradation rate of PTEN. Interacts (via guanylate kinase domain) with DLGAP1. Interacts (via the PDZ domains) with GRIN2A, GRID2 and NLGN1. Interacts with CTNND2, CTNNB1 and MAGUIN-1. Interacts with ACVR2A, SMAD2 and SMAD3. Part of a complex consisting of MAGI2/ARIP1, ACVR2A, ACVR1B and SMAD3. May interact with HTR2A. Interacts with RAPGEF2. Identified in a complex with ACTN4, CASK, IQGAP1, NPHS1, SPTAN1 and SPTBN1. Interacts with DDN. Found in a complex, at least composed of KIDINS220, MAGI2, NTRK1 and RAPGEF2; the complex is mainly formed at late endosomes in a NGF-dependent manner. Interacts with RAPGEF2; the interaction occurs before or after nerve growth factor (NGF) stimulation. Interacts (via PDZ domain) with KIDINS220 (via C-terminal domain). Interacts with IGSF9 and HTR4. Interacts with DLL1. Found in a complex with IGSF9B and NLGN2; the interaction with IGSF9B is mediated via the PDZ 5 and PDZ 6 domains, while the interaction with NLGN2 is mediated via the WW1, WW2 and PDZ2 domains. Interacts (via PDZ 6 domain) with USH1G (via SAM domain); the interaction is triggered by phosphorylation of USH1G by CK2 and negatively regulates MAGI2-mediated endocytosis. In terms of tissue distribution, expressed throughout the retina except in the nuclear layers and the photoreceptor outer segments (at protein level). Highest retinal expression is observed in the outer plexiform layer, the outer limiting membrane and the inner segment of photoreceptor cells (at protein level). Expressed in brain.

It is found in the cytoplasm. It localises to the late endosome. The protein localises to the synapse. Its subcellular location is the synaptosome. The protein resides in the cell membrane. It is found in the cytoskeleton. It localises to the microtubule organizing center. The protein localises to the centrosome. Its subcellular location is the cell projection. The protein resides in the cilium. It is found in the centriole. It localises to the photoreceptor inner segment. The protein localises to the photoreceptor outer segment. Seems to act as a scaffold molecule at synaptic junctions by assembling neurotransmitter receptors and cell adhesion proteins. Plays a role in nerve growth factor (NGF)-induced recruitment of RAPGEF2 to late endosomes and neurite outgrowth. May play a role in regulating activin-mediated signaling in neuronal cells. Enhances the ability of PTEN to suppress AKT1 activation. Plays a role in receptor-mediated clathrin-dependent endocytosis which is required for ciliogenesis. The protein is Membrane-associated guanylate kinase, WW and PDZ domain-containing protein 2 (Magi2) of Mus musculus (Mouse).